A 379-amino-acid chain; its full sequence is Cytochrome b (379 aa).

The next 4 helical transmembrane spans lie at 33 to 53, 77 to 98, 113 to 133, and 178 to 198; these read FGSL…FLAM, WLIR…FIHV, WNIG…GYVL, and FFAF…VHLL. Histidine 83 and histidine 97 together coordinate heme b. Residues histidine 182 and histidine 196 each contribute to the heme b site. Residue histidine 201 coordinates a ubiquinone. 4 helical membrane-spanning segments follow: residues 226–246, 288–308, 320–340, and 347–367; these read TKDL…VLFF, LGGV…PLLN, VTQV…WIGG, and FTTI…ILIP.

The protein belongs to the cytochrome b family. As to quaternary structure, the cytochrome bc1 complex contains 11 subunits: 3 respiratory subunits (MT-CYB, CYC1 and UQCRFS1), 2 core proteins (UQCRC1 and UQCRC2) and 6 low-molecular weight proteins (UQCRH/QCR6, UQCRB/QCR7, UQCRQ/QCR8, UQCR10/QCR9, UQCR11/QCR10 and a cleavage product of UQCRFS1). This cytochrome bc1 complex then forms a dimer. Requires heme b as cofactor.

The protein resides in the mitochondrion inner membrane. Component of the ubiquinol-cytochrome c reductase complex (complex III or cytochrome b-c1 complex) that is part of the mitochondrial respiratory chain. The b-c1 complex mediates electron transfer from ubiquinol to cytochrome c. Contributes to the generation of a proton gradient across the mitochondrial membrane that is then used for ATP synthesis. The polypeptide is Cytochrome b (MT-CYB) (Akodon cursor (Cursor grass mouse)).